The chain runs to 391 residues: Origin recognition complex subunit 2 (391 aa).

Residues 1-43 are disordered; sequence MEEYTDSGEDKNVYSDDDNDYFTASTQNNRTSKNTDSSPLDPK. Positions 22 to 38 are enriched in polar residues; the sequence is FTASTQNNRTSKNTDSS.

It belongs to the ORC2 family. In terms of assembly, ORC is composed of six subunits.

Its subcellular location is the nucleus. In terms of biological role, component of the origin recognition complex (ORC) that binds origins of replication. DNA-binding is ATP-dependent, however specific DNA sequences that define origins of replication have not been identified so far. ORC is required to assemble the pre-replication complex necessary to initiate DNA replication. This is Origin recognition complex subunit 2 (orcB) from Dictyostelium discoideum (Social amoeba).